Consider the following 489-residue polypeptide: Neuropeptide CCHamide-2 receptor (489 aa).

Topologically, residues 1-74 are extracellular; sequence MYASLMDVGQ…DRPETYIVTV (74 aa). Asn25 and Asn50 each carry an N-linked (GlcNAc...) asparagine glycan. Residues 75–95 form a helical membrane-spanning segment; sequence LYTLIFIVGVLGNGTLVIIFF. Over 96–107 the chain is Cytoplasmic; sequence RHRSMRNIPNTY. A helical transmembrane segment spans residues 108–128; the sequence is ILSLALADLLVILVCVPVATI. Residues 129–143 lie on the Extracellular side of the membrane; it reads VYTQESWPFERNMCR. Cys142 and Cys225 are oxidised to a cystine. Residues 144 to 164 traverse the membrane as a helical segment; the sequence is ISEFFKDISIGVSVFTLTALS. Residues 165 to 184 are Cytoplasmic-facing; that stretch reads GERYCAIVNPLRKLQTKPLT. A helical transmembrane segment spans residues 185–205; it reads VFTAVMIWILAILLGMPSVLF. At 206–235 the chain is on the extracellular side; that stretch reads SDIKSYPVFTATGNMTIEVCSPFRDPEYAK. An N-linked (GlcNAc...) asparagine glycan is attached at Asn219. The chain crosses the membrane as a helical span at residues 236–256; the sequence is FMVAGKALVYYLLPLSIIGAL. Residues 257–293 are Cytoplasmic-facing; sequence YIMMAKRLHMSARNMPGEQQSMQSRTQARARLHVARM. Residues 294–314 form a helical membrane-spanning segment; that stretch reads VVAFVVVFFICFFPYHVFELW. Residues 315-333 lie on the Extracellular side of the membrane; sequence YHFYPTAEEDFDEFWNVLR. Residues 334–354 form a helical membrane-spanning segment; it reads IVGFCTSFLNSCVNPVALYCV. At 355–489 the chain is on the cytoplasmic side; it reads SGVFRQHFNR…NRYESGVMRY (135 aa). Positions 438–468 are disordered; sequence SFHRQDSMPLQHGNAHGGGAGGGSSGLGAGG. The span at 452-468 shows a compositional bias: gly residues; that stretch reads AHGGGAGGGSSGLGAGG.

Belongs to the G-protein coupled receptor 1 family. Highly expressed in larval brain. Also highly expressed in adult brain with very low levels in larval and adult gut.

The protein localises to the cell membrane. Functionally, receptor for the neuropeptide CCHamide-2. The chain is Neuropeptide CCHamide-2 receptor from Drosophila melanogaster (Fruit fly).